The primary structure comprises 59 residues: Large ribosomal subunit protein uL30 (59 aa).

This sequence belongs to the universal ribosomal protein uL30 family. Part of the 50S ribosomal subunit.

The chain is Large ribosomal subunit protein uL30 from Aeromonas hydrophila subsp. hydrophila (strain ATCC 7966 / DSM 30187 / BCRC 13018 / CCUG 14551 / JCM 1027 / KCTC 2358 / NCIMB 9240 / NCTC 8049).